The primary structure comprises 491 residues: Argininosuccinate lyase (491 aa).

The protein belongs to the lyase 1 family. Argininosuccinate lyase subfamily.

It is found in the cytoplasm. It catalyses the reaction 2-(N(omega)-L-arginino)succinate = fumarate + L-arginine. Its pathway is amino-acid biosynthesis; L-arginine biosynthesis; L-arginine from L-ornithine and carbamoyl phosphate: step 3/3. The polypeptide is Argininosuccinate lyase (Methanosarcina acetivorans (strain ATCC 35395 / DSM 2834 / JCM 12185 / C2A)).